Here is a 478-residue protein sequence, read N- to C-terminus: Transposase for insertion sequence element IS231B (478 aa).

This sequence belongs to the transposase 11 family.

Functionally, involved in the transposition of the insertion sequence. This is Transposase for insertion sequence element IS231B from Bacillus thuringiensis subsp. berliner.